A 41-amino-acid polypeptide reads, in one-letter code: Ranatuerin-2PLg (41 aa).

Positions 1–11 are excised as a propeptide; it reads DDGVEMTEEEV. Cys36 and Cys41 are oxidised to a cystine.

The protein belongs to the frog skin active peptide (FSAP) family. Ranatuerin subfamily.

Its subcellular location is the secreted. In terms of biological role, antimicrobial peptide. This chain is Ranatuerin-2PLg, found in Lithobates palustris (Pickerel frog).